A 284-amino-acid polypeptide reads, in one-letter code: Large ribosomal subunit protein uL2 (284 aa).

Residues 232–284 (RGTAMNPVDHPHGGGEGRHNGYIPRTPWGKVTKGLKTRDKRKSNKWIVKDRRK) are disordered. A compositionally biased stretch (basic and acidic residues) spans 240 to 250 (DHPHGGGEGRH). The segment covering 264 to 284 (KGLKTRDKRKSNKWIVKDRRK) has biased composition (basic residues).

It belongs to the universal ribosomal protein uL2 family. Part of the 50S ribosomal subunit. Forms a bridge to the 30S subunit in the 70S ribosome.

In terms of biological role, one of the primary rRNA binding proteins. Required for association of the 30S and 50S subunits to form the 70S ribosome, for tRNA binding and peptide bond formation. It has been suggested to have peptidyltransferase activity; this is somewhat controversial. Makes several contacts with the 16S rRNA in the 70S ribosome. This is Large ribosomal subunit protein uL2 from Chlamydia abortus (strain DSM 27085 / S26/3) (Chlamydophila abortus).